A 304-amino-acid polypeptide reads, in one-letter code: Nod factor export ATP-binding protein I (304 aa).

Residues 6–236 enclose the ABC transporter domain; the sequence is IDFQQVEKRY…EIGCDVIEIY (231 aa). An ATP-binding site is contributed by 38–45; the sequence is GPNGAGKT.

This sequence belongs to the ABC transporter superfamily. Lipooligosaccharide exporter (TC 3.A.1.102) family. The complex is composed of two ATP-binding proteins (NodI) and two transmembrane proteins (NodJ).

It localises to the cell inner membrane. Part of the ABC transporter complex NodIJ involved in the export of the nodulation factors (Nod factors), the bacterial signal molecules that induce symbiosis and subsequent nodulation induction. Nod factors are LCO (lipo-chitin oligosaccharide), a modified beta-1,4-linked N-acetylglucosamine oligosaccharide. This subunit is responsible for energy coupling to the transport system. The chain is Nod factor export ATP-binding protein I from Burkholderia pseudomallei (strain K96243).